A 72-amino-acid polypeptide reads, in one-letter code: Defensin-like protein 35 (72 aa).

Residues 1 to 22 form the signal peptide; it reads MASNKISFSFVLCLYMCSLLDA. 3 cysteine pairs are disulfide-bonded: Cys-32/Cys-58, Cys-44/Cys-67, and Cys-48/Cys-69.

Belongs to the DEFL family.

The protein resides in the secreted. This chain is Defensin-like protein 35, found in Arabidopsis thaliana (Mouse-ear cress).